Here is a 251-residue protein sequence, read N- to C-terminus: Probable transcriptional regulatory protein RSal33209_2002 (251 aa).

This sequence belongs to the TACO1 family.

It is found in the cytoplasm. The polypeptide is Probable transcriptional regulatory protein RSal33209_2002 (Renibacterium salmoninarum (strain ATCC 33209 / DSM 20767 / JCM 11484 / NBRC 15589 / NCIMB 2235)).